The chain runs to 190 residues: Adenylate kinase (190 aa).

G11–T16 serves as a coordination point for ATP. The tract at residues S31–V60 is NMP. AMP-binding positions include T32, R37, Q58–V60, G86–R89, and Q93. The LID stretch occupies residues E127 to D137. R128 contacts ATP. R134 and R145 together coordinate AMP. An ATP-binding site is contributed by G173.

Belongs to the adenylate kinase family. In terms of assembly, monomer.

Its subcellular location is the cytoplasm. It catalyses the reaction AMP + ATP = 2 ADP. It functions in the pathway purine metabolism; AMP biosynthesis via salvage pathway; AMP from ADP: step 1/1. In terms of biological role, catalyzes the reversible transfer of the terminal phosphate group between ATP and AMP. Plays an important role in cellular energy homeostasis and in adenine nucleotide metabolism. In Parabacteroides distasonis (strain ATCC 8503 / DSM 20701 / CIP 104284 / JCM 5825 / NCTC 11152), this protein is Adenylate kinase.